The primary structure comprises 47 residues: Protein RL9A (47 aa).

The helical transmembrane segment at Cys27–Leu47 threads the bilayer.

It is found in the host membrane. This Human cytomegalovirus (strain Merlin) (HHV-5) protein is Protein RL9A (RL9A).